The chain runs to 93 residues: Small ribosomal subunit protein uS19 (93 aa).

This sequence belongs to the universal ribosomal protein uS19 family.

In terms of biological role, protein S19 forms a complex with S13 that binds strongly to the 16S ribosomal RNA. This chain is Small ribosomal subunit protein uS19, found in Alkaliphilus metalliredigens (strain QYMF).